A 621-amino-acid chain; its full sequence is MADFEELRNMVSSFRVSELQVLLGFAGRNKSGRKHDLLMRALHLLKSGCSPAVQIKIRELYRRRYPRTLEGLSDLSTIKSSVFSLDGGSSPVEPDLAVAGIHSLPSTSVTPHSPSSPVGSVLLQDTKPTFEMQQPSPPIPPVHPDVQLKNLPFYDVLDVLIKPTSLVQSSIQRFQEKFFIFALTPQQVREICISRDFLPGGRRDYTVQVQLRLCLAETSCPQEDNYPNSLCIKVNGKLFPLPGYAPPPKNGIEQKRPGRPLNITSLVRLSSAVPNQISISWASEIGKNYSMSVYLVRQLTSAMLLQRLKMKGIRNPDHSRALIKEKLTADPDSEIATTSLRVSLMCPLGKMRLTIPCRAVTCTHLQCFDAALYLQMNEKKPTWICPVCDKKAAYESLILDGLFMEILNDCSDVDEIKFQEDGSWCPMRPKKEAMKVSSQPCTKIESSSVLSKPCSVTVASEASKKKVDVIDLTIESSSDEEEDPPAKRKCIFMSETQSSPTKGVLMYQPSSVRVPSVTSVDPAAIPPSLTDYSVPFHHTPISSMSSDLPGLDFLSLIPVDPQYCPPMFLDSLTSPLTASSTSVTTTSSHESSTHVSSSSSRSETGVITSSGSNIPDIISLD.

In terms of domain architecture, SAP spans 11-45 (VSSFRVSELQVLLGFAGRNKSGRKHDLLMRALHLL). Positions 19–23 (LQVLL) match the LXXLL motif motif. Residues Lys-46 and Lys-249 each participate in a glycyl lysine isopeptide (Lys-Gly) (interchain with G-Cter in SUMO2) cross-link. Residues 134-299 (QPSPPIPPVH…SMSVYLVRQL (166 aa)) enclose the PINIT domain. An SP-RING-type zinc finger spans residues 331–412 (PDSEIATTSL…FMEILNDCSD (82 aa)). Zn(2+) is bound by residues Cys-362, His-364, Cys-385, and Cys-388. Residues Lys-430, Lys-435, Lys-443, and Lys-452 each participate in a glycyl lysine isopeptide (Lys-Gly) (interchain with G-Cter in SUMO2) cross-link. The tract at residues 467–473 (VDVIDLT) is SUMO1-binding. Residues Ser-476, Ser-477, and Ser-478 each carry the phosphoserine modification. A Nuclear localization signal motif is present at residues 484–492 (PPAKRKCIF). Lys-489 participates in a covalent cross-link: Glycyl lysine isopeptide (Lys-Gly) (interchain with G-Cter in SUMO2). Ser-499 bears the Phosphoserine mark. Glycyl lysine isopeptide (Lys-Gly) (interchain with G-Cter in SUMO2) cross-links involve residues Lys-502 and Gln-562. Low complexity predominate over residues 579 to 610 (SSTSVTTTSSHESSTHVSSSSSRSETGVITSS). The segment at 579-621 (SSTSVTTTSSHESSTHVSSSSSRSETGVITSSGSNIPDIISLD) is disordered.

The protein belongs to the PIAS family. In terms of assembly, binds SUMO1 and UBE2I. Interacts with AXIN1, JUN, MDM2, PARK7, TP53 and TP73 isoform alpha, but not TP73 isoform beta. Interacts with STAT4 following IL12 and IFN-alpha stimulation of T-cells. Interacts also with GTF2I, GTF2IRD1, IKFZ1, DAB2 and MSX2, as well as with several steroid receptors, including ESR1, ESR2, NR3C1, PGR, AR, and with NCOA2. Sumoylation of a target protein seems to enhance the interaction. Binds to sumoylated ELK1. Binds DNA, such as CDKN1A promoter, in a sequence-specific manner. Interacts with PLAG1. Interacts with KLF8; the interaction results in SUMO ligation and repression of KLF8 transcriptional activity and of its cell cycle progression into G(1) phase. PIAS2-beta interacts with IFIH1/MDA5. Isoform PIAS2-alpha interacts with PML (isoform PML-12). Interacts with PRDM1/Blimp-1. Post-translationally, sumoylated. In terms of tissue distribution, mainly expressed in testis. Isoform 3 is expressed predominantly in adult testis, weakly in pancreas, embryonic testis and sperm, and at very low levels in other organs.

It is found in the nucleus speckle. The protein resides in the nucleus. It localises to the PML body. Its pathway is protein modification; protein sumoylation. In terms of biological role, functions as an E3-type small ubiquitin-like modifier (SUMO) ligase, stabilizing the interaction between UBE2I and the substrate, and as a SUMO-tethering factor. Plays a crucial role as a transcriptional coregulator in various cellular pathways, including the STAT pathway, the p53 pathway and the steroid hormone signaling pathway. The effects of this transcriptional coregulation, transactivation or silencing may vary depending upon the biological context and the PIAS2 isoform studied. However, it seems to be mostly involved in gene silencing. Binds to sumoylated ELK1 and enhances its transcriptional activity by preventing recruitment of HDAC2 by ELK1, thus reversing SUMO-mediated repression of ELK1 transactivation activity. Isoform PIAS2-beta, but not isoform PIAS2-alpha, promotes MDM2 sumoylation. Isoform PIAS2-alpha promotes PARK7 sumoylation. Isoform PIAS2-beta promotes NCOA2 sumoylation more efficiently than isoform PIAS2-alpha. Isoform PIAS2-alpha sumoylates PML at'Lys-65' and 'Lys-160'. This Homo sapiens (Human) protein is E3 SUMO-protein ligase PIAS2 (PIAS2).